A 426-amino-acid polypeptide reads, in one-letter code: MKHLTEMVRQHKAGKTNGIYAVCSAHPLVLEAAIRYASANQTPLLIEATSNQVDQFGGYTGMTPADFRGFVCQLADSLNFPQDALILGGDHLGPNRWQNLPAAQAMANADDLIKSYVAAGFKKIHLDCSMSCQDDPIPLTDDIVAERAARLAKVAEETCREHFGEADLEYVIGTEVPVPGGAHETLSELAVTTPDAARATLEAHRHAFEKQGLNAIWPRIIALVVQPGVEFDHTNVIDYQSAKATALSQMVENYETLIFEAHSTDYQTPQSLRQLVIDHFAILKVGPALTFALREALFSLAAIEEELVPAKACSGLRQVLENVMLDRPEYWQSHYHGDGNARRLARGYSYSDRVRYYWPDSQIDDAFAHLVRNLADSPIPLPLISQYLPLQYVKVRSGELQPTPRELIINHIQDILAQYHTACEGQ.

It belongs to the GatZ/KbaZ family. KbaZ subfamily. In terms of assembly, forms a complex with KbaY.

Its pathway is carbohydrate metabolism; D-tagatose 6-phosphate degradation; D-glyceraldehyde 3-phosphate and glycerone phosphate from D-tagatose 6-phosphate: step 2/2. Its function is as follows. Component of the tagatose-1,6-bisphosphate aldolase KbaYZ that is required for full activity and stability of the Y subunit. Could have a chaperone-like function for the proper and stable folding of KbaY. When expressed alone, KbaZ does not show any aldolase activity. The polypeptide is D-tagatose-1,6-bisphosphate aldolase subunit KbaZ (Escherichia coli O81 (strain ED1a)).